Consider the following 307-residue polypeptide: Nucleotide-binding protein ACP_0619 (307 aa).

Residues 1-14 (MPAPEPTRRAKKDA) are compositionally biased toward basic and acidic residues. Positions 1–23 (MPAPEPTRRAKKDASASPSPAHP) are disordered. Position 33–40 (33–40 (GLSGAGKG)) interacts with ATP. 83-86 (DVRE) is a GTP binding site.

Belongs to the RapZ-like family.

Functionally, displays ATPase and GTPase activities. The sequence is that of Nucleotide-binding protein ACP_0619 from Acidobacterium capsulatum (strain ATCC 51196 / DSM 11244 / BCRC 80197 / JCM 7670 / NBRC 15755 / NCIMB 13165 / 161).